A 356-amino-acid chain; its full sequence is Tyrosine recombinase XerS (356 aa).

Positions 16–121 (VMPPYVLEYY…ALSSLYKYLT (106 aa)) constitute a Core-binding (CB) domain. Residues 169 to 354 (GFLDYIDSEY…INEEQKNALD (186 aa)) enclose the Tyr recombinase domain. Residues Arg210, Lys234, His306, Arg309, and His332 contribute to the active site. Residue Tyr341 is the O-(3'-phospho-DNA)-tyrosine intermediate of the active site.

It belongs to the 'phage' integrase family. XerS subfamily.

It localises to the cytoplasm. Its activity is regulated as follows. FtsK is required for recombination. Site-specific tyrosine recombinase, which acts by catalyzing the cutting and rejoining of the recombining DNA molecules. Essential to convert dimers of the bacterial chromosome into monomers to permit their segregation at cell division. Binds an atypical recombination dif site (difSL). Binds preferentially to the left arm and cooperatively to the right arm of difSL. This is Tyrosine recombinase XerS from Lactococcus lactis subsp. cremoris (strain MG1363).